The primary structure comprises 1087 residues: Apoptosis-stimulating of p53 protein 1 (1087 aa).

Positions 82 to 122 are disordered; it reads HEDSPTESSEQGARQTQEQRTQRSVVNVPGEKRTENGVGNP. Residues 87–106 show a composition bias toward polar residues; sequence TESSEQGARQTQEQRTQRSV. 2 positions are modified to phosphoserine: Ser-332 and Ser-335. Disordered regions lie at residues 374-415, 442-721, and 734-878; these read SSAA…GMEG, IGKG…PNIQ, and GMEG…TGHG. Positions 393 to 405 are enriched in polar residues; it reads KQNSASVKSTQMT. The span at 445–458 shows a compositional bias: pro residues; that stretch reads GPPPIPGVGKPLPP. A compositionally biased stretch (low complexity) spans 459–476; it reads SYGTYPSSGPLGPGSTSS. Residues 506–520 show a composition bias toward polar residues; sequence NAPQPGSSQQIQQRI. Over residues 523 to 536 the composition is skewed to pro residues; that stretch reads PPSPTYPPAGPPAF. Asymmetric dimethylarginine is present on Arg-552. Over residues 570 to 589 the composition is skewed to polar residues; that stretch reads QTVNSSSIYSMYLQQATPPK. Over residues 610–625 the composition is skewed to low complexity; the sequence is PVLPSGSASPSPLPFL. 2 positions are modified to phosphoserine: Ser-679 and Ser-708. A compositionally biased stretch (polar residues) spans 805–831; sequence PQTTHQTAEPTEDNNNNVAPVPSTEQI. 2 ANK repeats span residues 917–949 and 950–982; these read EGITPLHNAVCAGHHHIVKFLLDFGVNVNAADS and DGWTPLHCAASCNSVHLCKQLVESGAAIFASTI. Residues 1016–1078 form the SH3 domain; the sequence is MNKGTVYALW…PKNLLGLYPR (63 aa).

Belongs to the ASPP family. As to quaternary structure, interacts with P53/TP53; the interaction promotes pro-apoptotic activity.

The protein localises to the cytoplasm. It is found in the nucleus. Functionally, regulator that plays a central role in regulation of apoptosis via its interaction with p53/TP53. Regulates TP53 by enhancing the DNA binding and transactivation function of TP53 on the promoters of proapoptotic genes in vivo. This chain is Apoptosis-stimulating of p53 protein 1 (Ppp1r13b), found in Mus musculus (Mouse).